A 328-amino-acid chain; its full sequence is DNA-directed RNA polymerase subunit alpha (328 aa).

Positions 1–232 (MSTQGFLKPR…DQISVFAALE (232 aa)) are alpha N-terminal domain (alpha-NTD). Residues 248–328 (IDPVLLRPVD…NWPPLGLERP (81 aa)) form an alpha C-terminal domain (alpha-CTD) region.

This sequence belongs to the RNA polymerase alpha chain family. As to quaternary structure, homodimer. The RNAP catalytic core consists of 2 alpha, 1 beta, 1 beta' and 1 omega subunit. When a sigma factor is associated with the core the holoenzyme is formed, which can initiate transcription.

It catalyses the reaction RNA(n) + a ribonucleoside 5'-triphosphate = RNA(n+1) + diphosphate. In terms of biological role, DNA-dependent RNA polymerase catalyzes the transcription of DNA into RNA using the four ribonucleoside triphosphates as substrates. This chain is DNA-directed RNA polymerase subunit alpha, found in Bordetella bronchiseptica (strain ATCC BAA-588 / NCTC 13252 / RB50) (Alcaligenes bronchisepticus).